Reading from the N-terminus, the 29-residue chain is Inorganic pyrophosphatase (29 aa).

It is found in the periplasm. It catalyses the reaction diphosphate + H2O = 2 phosphate + H(+). In terms of biological role, inorganic pyrophosphatase is an essential enzyme for the activation of sulfate by sulfate reducing bacteria. This is a high activity pyrophosphatase. This is Inorganic pyrophosphatase from Nitratidesulfovibrio vulgaris (strain ATCC 29579 / DSM 644 / CCUG 34227 / NCIMB 8303 / VKM B-1760 / Hildenborough) (Desulfovibrio vulgaris).